The chain runs to 1130 residues: Tyrosine-protein kinase ABL1 (1130 aa).

Positions 1–60 (MLEICLKLVGCKSKKGLSSSSSCYLEEALQRPVASDFEPQGLSEAARWNSKENLLAGPSE) are CAP. Leu2 carries N-myristoyl glycine lipidation. Phosphoserine is present on Ser50. In terms of domain architecture, SH3 spans 61 to 121 (NDPNLFVALY…PSNYITPVNS (61 aa)). Phosphotyrosine; by autocatalysis is present on Tyr70. 6 positions are modified to phosphotyrosine: Tyr115, Tyr128, Tyr139, Tyr172, Tyr185, and Tyr215. The 91-residue stretch at 127–217 (WYHGPVSRNA…GLITTLHYPA (91 aa)) folds into the SH2 domain. Tyr226 bears the Phosphotyrosine; by autocatalysis mark. Phosphoserine is present on Ser229. Positions 242–493 (ITMKHKLGGG…PSFAEIHQAF (252 aa)) constitute a Protein kinase domain. 248-256 (LGGGQYGEV) lines the ATP pocket. Tyr253 and Tyr257 each carry phosphotyrosine. ATP contacts are provided by residues Lys271 and 316–322 (EFMTYGN). Asp363 functions as the Proton acceptor in the catalytic mechanism. The Kinase activation loop signature appears at 381–405 (DFGLSRLMTGDTYTAHAGAKFPIKW). Tyr393 is modified (phosphotyrosine; by autocatalysis and SRC-type Tyr-kinases). The residue at position 413 (Tyr413) is a Phosphotyrosine. Phosphoserine is present on residues Ser446, Ser559, and Ser569. The disordered stretch occupies residues 518 to 996 (AVSTLLQAPE…SASSALAGDQ (479 aa)). Residues 537–566 (RAAEHRDTTDVPEMPHSKGQGESDPLDHEP) show a composition bias toward basic and acidic residues. Residues 586–597 (EDERLLPKDKKT) are compositionally biased toward basic and acidic residues. The short motif at 605-609 (KKKKK) is the Nuclear localization signal 1 element. 2 positions are modified to phosphoserine; by PAK2: Ser618 and Ser619. Ser620, Ser659, and Ser683 each carry phosphoserine. The span at 620-640 (SFREMDGQPERRGAGEEEGRD) shows a compositional bias: basic and acidic residues. The segment covering 689 to 698 (KSSTLTSSRL) has biased composition (polar residues). A Nuclear localization signal 2 motif is present at residues 709–715 (SSKRFLR). Position 711 is an N6-acetyllysine; by EP300 (Lys711). A Phosphoserine modification is found at Ser718. Thr735 and Thr751 each carry phosphothreonine. Positions 740-752 (LQSTGRQFDSSTF) are enriched in polar residues. Positions 755–774 (HKSEKPALPRKRAGENRSDQ) are enriched in basic and acidic residues. The short motif at 762–769 (LPRKRAGE) is the Nuclear localization signal 3 element. Thr781 is modified (phosphothreonine). Over residues 788–802 (KKNEEAADEVFKDIM) the composition is skewed to basic and acidic residues. A phosphothreonine mark is found at Thr814, Thr823, Thr844, and Thr852. Residue Ser855 is modified to Phosphoserine. The tract at residues 869 to 968 (PAEESRVRRH…VLPATPKPQS (100 aa)) is DNA-binding. Basic and acidic residues predominate over residues 881 to 891 (SSESPGRDKGK). Low complexity predominate over residues 905 to 915 (ASAGKAGGKPS). Phosphoserine is present on Ser917. The tract at residues 953 to 1130 (EGLKKPVLPA…VKEISDIVQR (178 aa)) is F-actin-binding. The span at 965–975 (KPQSAKPSGTP) shows a compositional bias: polar residues. Ser977 carries the phosphoserine modification. Low complexity predominate over residues 984–993 (TLPSASSALA). The short motif at 1090–1100 (LENNLRELQIC) is the Nuclear export signal element.

This sequence belongs to the protein kinase superfamily. Tyr protein kinase family. ABL subfamily. As to quaternary structure, interacts with SORBS1 following insulin stimulation. Found in a trimolecular complex containing CDK5 and CABLES1. Interacts with CABLES1 and PSTPIP1. Interacts with ZDHHC16, ITGB1 and HCK. Interacts with STX17; probably phosphorylates STX17. Interacts with INPPL1/SHIP2. Interacts with the 14-3-3 proteins, YWHAB, YWHAE, YWHAG, YWHAH, SFN and YWHAZ; the interaction with 14-3-3 proteins requires phosphorylation on Thr-735 and, sequesters ABL1 into the cytoplasm. Interacts with ABI1, ABI2, BCR, CRK, FGR, FYN, HCK, LYN, PSMA7 RAD9A, RAD51, RAD52, TP73 and WASF3. A complex made of ABL1, CTTN and MYLK regulates cortical actin-based cytoskeletal rearrangement critical to sphingosine 1-phosphate (S1P)-mediated endothelial cell (EC) barrier enhancement. Interacts (via SH3 domain) with CASP9; the interaction is direct and increases in the response of cells to genotoxic stress and ABL1/c-Abl activation. Found in a complex with ABL1, ABL2, CRK and UNC119; leading to the inhibition of CRK phosphorylation by ABL kinases. Interacts with TBX21. Interacts with NEDD9/HEF1; interaction is induced by CXCL12 promotion of ABL-mediated phosphorylation of NEDD9/HEF1. It depends on Mg(2+) as a cofactor. Post-translationally, acetylated at Lys-711 by EP300 which promotes the cytoplasmic translocation. In terms of processing, phosphorylation at Tyr-70 by members of the SRC family of kinases disrupts SH3 domain-based autoinhibitory interactions and intermolecular associations, such as that with ABI1, and also enhances kinase activity. Phosphorylation at Tyr-226 and Tyr-393 correlate with increased activity. DNA damage-induced activation of ABL1 requires the function of ATM and Ser-446 phosphorylation. Phosphorylation at Ser-569 has been attributed to a CDC2-associated kinase and is coupled to cell division. Phosphorylation at Ser-618 and Ser-619 by PAK2 increases binding to CRK and reduces binding to ABI1. Phosphorylation on Thr-735 is required for binding 14-3-3 proteins for cytoplasmic translocation. Phosphorylated by PRKDC. Polyubiquitinated. Polyubiquitination of ABL1 leads to degradation. In terms of tissue distribution, widely expressed.

The protein resides in the cytoplasm. The protein localises to the cytoskeleton. It is found in the nucleus. It localises to the mitochondrion. Its subcellular location is the nucleus membrane. The catalysed reaction is L-tyrosyl-[protein] + ATP = O-phospho-L-tyrosyl-[protein] + ADP + H(+). With respect to regulation, stabilized in the inactive form by an association between the SH3 domain and the SH2-TK linker region, interactions of the N-terminal cap, and contributions from an N-terminal myristoyl group and phospholipids. Activated by autophosphorylation as well as by SRC-family kinase-mediated phosphorylation. Activated by RIN1 binding to the SH2 and SH3 domains. Also stimulated by cell death inducers and DNA-damage. Phosphatidylinositol 4,5-bisphosphate (PIP2), a highly abundant phosphoinositide known to regulate cytoskeletal and membrane proteins, also inhibits the tyrosine kinase activity. Activated by 5-(1,3-diaryl-1H-pyrazol-4-yl)hydantoin, 5-[3-(4-fluorophenyl)-1-phenyl-1H-pyrazol-4-yl]-2,4-imidazolidinedione (DPH). Inhibited by ABI1, whose activity is controlled by ABL1 itself through tyrosine phosphorylation. Also inhibited by imatinib mesylate (Gleevec) which is used for the treatment of chronic myeloid leukemia (CML), and by VX-680, an inhibitor that also acts on imatinib-resistant mutants. Its function is as follows. Non-receptor tyrosine-protein kinase that plays a role in many key processes linked to cell growth and survival such as cytoskeleton remodeling in response to extracellular stimuli, cell motility and adhesion, receptor endocytosis, autophagy, DNA damage response and apoptosis. Coordinates actin remodeling through tyrosine phosphorylation of proteins controlling cytoskeleton dynamics like WASF3 (involved in branch formation); ANXA1 (involved in membrane anchoring); DBN1, DBNL, CTTN, RAPH1 and ENAH (involved in signaling); or MAPT and PXN (microtubule-binding proteins). Phosphorylation of WASF3 is critical for the stimulation of lamellipodia formation and cell migration. Involved in the regulation of cell adhesion and motility through phosphorylation of key regulators of these processes such as BCAR1, CRK, CRKL, DOK1, EFS or NEDD9. Phosphorylates multiple receptor tyrosine kinases and more particularly promotes endocytosis of EGFR, facilitates the formation of neuromuscular synapses through MUSK, inhibits PDGFRB-mediated chemotaxis and modulates the endocytosis of activated B-cell receptor complexes. Other substrates which are involved in endocytosis regulation are the caveolin (CAV1) and RIN1. Moreover, ABL1 regulates the CBL family of ubiquitin ligases that drive receptor down-regulation and actin remodeling. Phosphorylation of CBL leads to increased EGFR stability. Involved in late-stage autophagy by regulating positively the trafficking and function of lysosomal components. ABL1 targets to mitochondria in response to oxidative stress and thereby mediates mitochondrial dysfunction and cell death. In response to oxidative stress, phosphorylates serine/threonine kinase PRKD2 at 'Tyr-717'. ABL1 is also translocated in the nucleus where it has DNA-binding activity and is involved in DNA-damage response and apoptosis. Many substrates are known mediators of DNA repair: DDB1, DDB2, ERCC3, ERCC6, RAD9A, RAD51, RAD52 or WRN. Activates the proapoptotic pathway when the DNA damage is too severe to be repaired. Phosphorylates TP73, a primary regulator for this type of damage-induced apoptosis. Phosphorylates the caspase CASP9 on 'Tyr-153' and regulates its processing in the apoptotic response to DNA damage. Phosphorylates PSMA7 that leads to an inhibition of proteasomal activity and cell cycle transition blocks. ABL1 also acts as a regulator of multiple pathological signaling cascades during infection. Several known tyrosine-phosphorylated microbial proteins have been identified as ABL1 substrates. This is the case of A36R of Vaccinia virus, Tir (translocated intimin receptor) of pathogenic E.coli and possibly Citrobacter, CagA (cytotoxin-associated gene A) of H.pylori, or AnkA (ankyrin repeat-containing protein A) of A.phagocytophilum. Pathogens can highjack ABL1 kinase signaling to reorganize the host actin cytoskeleton for multiple purposes, like facilitating intracellular movement and host cell exit. Finally, functions as its own regulator through autocatalytic activity as well as through phosphorylation of its inhibitor, ABI1. Regulates T-cell differentiation in a TBX21-dependent manner. Positively regulates chemokine-mediated T-cell migration, polarization, and homing to lymph nodes and immune-challenged tissues, potentially via activation of NEDD9/HEF1 and RAP1. Phosphorylates TBX21 on tyrosine residues leading to an enhancement of its transcriptional activator activity. In Homo sapiens (Human), this protein is Tyrosine-protein kinase ABL1 (ABL1).